The following is a 372-amino-acid chain: L-selectin (372 aa).

Positions 1–28 (MIFPWKCQSTQRDLCNIFKLWGWTMLCC) are cleaved as a signal peptide. Positions 29–38 (DFLAHHGTDC) are excised as a propeptide. Residues 39–332 (WTYHYSEKPM…FSMIKEGDYN (294 aa)) are Extracellular-facing. One can recognise a C-type lectin domain in the interval 55–155 (RFCRENYTDL…ACHKLKAALC (101 aa)). Disulfide bonds link Cys57/Cys155, Cys128/Cys147, Cys128/Cys160, Cys160/Cys171, Cys165/Cys180, Cys182/Cys191, Cys197/Cys241, Cys227/Cys254, Cys259/Cys303, and Cys289/Cys316. N-linked (GlcNAc...) asparagine glycans are attached at residues Asn60 and Asn104. Ca(2+)-binding residues include Glu118, Asn120, Glu126, Asn143, and Asp144. The region spanning 156 to 192 (YTASCQPWSCSGHGECVEIINNYTCNCDVGYYGPQCQ) is the EGF-like domain. An N-linked (GlcNAc...) asparagine glycan is attached at Asn177. Sushi domains lie at 195–256 (IQCE…TCQV) and 257–318 (IQCE…ICQK). N-linked (GlcNAc...) asparagine glycosylation is found at Asn216, Asn226, Asn232, Asn246, and Asn271. The chain crosses the membrane as a helical span at residues 333-355 (PLFIPVAVMVTAFSGLAFIIWLA). At 356–372 (RRLKKGKKSKKSMDDPY) the chain is on the cytoplasmic side.

The protein belongs to the selectin/LECAM family. As to quaternary structure, interaction with SELPLG/PSGL1 and PODXL2 is required for promoting recruitment and rolling of leukocytes. This interaction is dependent on the sialyl Lewis X glycan modification of SELPLG and PODXL2, and tyrosine sulfation modifications of SELPLG. Sulfation on 'Tyr-51' of SELPLG is important for L-selectin binding. In terms of processing, N-glycosylated.

It is found in the cell membrane. In terms of biological role, calcium-dependent lectin that mediates cell adhesion by binding to glycoproteins on neighboring cells. Mediates the adherence of lymphocytes to endothelial cells of high endothelial venules in peripheral lymph nodes. Promotes initial tethering and rolling of leukocytes in endothelia. This Pongo pygmaeus (Bornean orangutan) protein is L-selectin (SELL).